Here is a 165-residue protein sequence, read N- to C-terminus: PTS system glucose-specific EIIA component (165 aa).

Residues 33–137 form the PTS EIIA type-1 domain; it reads DPVFAGRMMG…STITPIVITN (105 aa). Residues His-70 and His-85 each coordinate Zn(2+). Residue His-85 is the Tele-phosphohistidine intermediate; for EIIA activity of the active site. His-85 is subject to Phosphohistidine; by HPr.

As to quaternary structure, heterodimer with glycerol kinase (glpk). The cofactor is Zn(2+).

The protein resides in the cytoplasm. Functionally, the phosphoenolpyruvate-dependent sugar phosphotransferase system (sugar PTS), a major carbohydrate active transport system, catalyzes the phosphorylation of incoming sugar substrates concomitantly with their translocation across the cell membrane. The enzyme II complex composed of PtsG and Crr is involved in glucose transport. This Bacillus anthracis protein is PTS system glucose-specific EIIA component (crr).